We begin with the raw amino-acid sequence, 472 residues long: Glutamate synthase [NADPH] small chain (472 aa).

The region spanning Gln41–Leu72 is the 4Fe-4S ferredoxin-type domain. 4 residues coordinate [4Fe-4S] cluster: Cys50, Cys53, Cys58, and Cys62.

Requires [4Fe-4S] cluster as cofactor.

It carries out the reaction 2 L-glutamate + NADP(+) = L-glutamine + 2-oxoglutarate + NADPH + H(+). The protein operates within amino-acid biosynthesis; L-glutamate biosynthesis via GLT pathway; L-glutamate from 2-oxoglutarate and L-glutamine (NADP(+) route): step 1/1. It functions in the pathway energy metabolism; nitrogen metabolism. Catalyzes the conversion of L-glutamine and 2-oxoglutarate into two molecules of L-glutamate. This Halomonas elongata (strain ATCC 33173 / DSM 2581 / NBRC 15536 / NCIMB 2198 / 1H9) protein is Glutamate synthase [NADPH] small chain.